We begin with the raw amino-acid sequence, 347 residues long: Holliday junction branch migration complex subunit RuvB (347 aa).

Residues 1–183 (MSEERFVSGH…FGVVLQLQFY (183 aa)) are large ATPase domain (RuvB-L). ATP is bound by residues Leu22, Arg23, Gly64, Lys67, Thr68, Thr69, 130-132 (EDF), Arg173, Tyr183, and Arg220. A Mg(2+)-binding site is contributed by Thr68. The segment at 184–254 (SEEELTRILM…VADAGLRMMG (71 aa)) is small ATPAse domain (RuvB-S). Residues 257–347 (AMGLDTVDHK…PEGPVQPRLF (91 aa)) are head domain (RuvB-H). The DNA site is built by Arg312 and Arg317.

It belongs to the RuvB family. In terms of assembly, homohexamer. Forms an RuvA(8)-RuvB(12)-Holliday junction (HJ) complex. HJ DNA is sandwiched between 2 RuvA tetramers; dsDNA enters through RuvA and exits via RuvB. An RuvB hexamer assembles on each DNA strand where it exits the tetramer. Each RuvB hexamer is contacted by two RuvA subunits (via domain III) on 2 adjacent RuvB subunits; this complex drives branch migration. In the full resolvosome a probable DNA-RuvA(4)-RuvB(12)-RuvC(2) complex forms which resolves the HJ.

It localises to the cytoplasm. It catalyses the reaction ATP + H2O = ADP + phosphate + H(+). Its function is as follows. The RuvA-RuvB-RuvC complex processes Holliday junction (HJ) DNA during genetic recombination and DNA repair, while the RuvA-RuvB complex plays an important role in the rescue of blocked DNA replication forks via replication fork reversal (RFR). RuvA specifically binds to HJ cruciform DNA, conferring on it an open structure. The RuvB hexamer acts as an ATP-dependent pump, pulling dsDNA into and through the RuvAB complex. RuvB forms 2 homohexamers on either side of HJ DNA bound by 1 or 2 RuvA tetramers; 4 subunits per hexamer contact DNA at a time. Coordinated motions by a converter formed by DNA-disengaged RuvB subunits stimulates ATP hydrolysis and nucleotide exchange. Immobilization of the converter enables RuvB to convert the ATP-contained energy into a lever motion, pulling 2 nucleotides of DNA out of the RuvA tetramer per ATP hydrolyzed, thus driving DNA branch migration. The RuvB motors rotate together with the DNA substrate, which together with the progressing nucleotide cycle form the mechanistic basis for DNA recombination by continuous HJ branch migration. Branch migration allows RuvC to scan DNA until it finds its consensus sequence, where it cleaves and resolves cruciform DNA. The sequence is that of Holliday junction branch migration complex subunit RuvB from Symbiobacterium thermophilum (strain DSM 24528 / JCM 14929 / IAM 14863 / T).